A 143-amino-acid polypeptide reads, in one-letter code: Lysozyme C (143 aa).

The N-terminal stretch at 1-15 (MKIPVFLLLLALANA) is a signal peptide. A C-type lysozyme domain is found at 16–143 (KVFQRCEWAR…LSAYIAGCGL (128 aa)). Cystine bridges form between Cys-21–Cys-141, Cys-45–Cys-129, Cys-79–Cys-94, and Cys-90–Cys-108. Catalysis depends on residues Glu-50 and Asp-67.

Belongs to the glycosyl hydrolase 22 family. As to quaternary structure, monomer.

It is found in the secreted. It carries out the reaction Hydrolysis of (1-&gt;4)-beta-linkages between N-acetylmuramic acid and N-acetyl-D-glucosamine residues in a peptidoglycan and between N-acetyl-D-glucosamine residues in chitodextrins.. In terms of biological role, lysozymes have primarily a bacteriolytic function; those in tissues and body fluids are associated with the monocyte-macrophage system and enhance the activity of immunoagents. The sequence is that of Lysozyme C from Takifugu rubripes (Japanese pufferfish).